The primary structure comprises 372 residues: Serine protease inhibitor 42Dd (372 aa).

Residues 1–15 (MYYLCIFLWVTSVAC) form the signal peptide. N-linked (GlcNAc...) asparagine glycans are attached at residues Asn-197 and Asn-232.

It belongs to the serpin family. In terms of tissue distribution, expressed in the ovary.

It is found in the secreted. Functionally, serine protease inhibitor with activity toward trypsin. Involved in innate immunity to fungal infection by negatively regulating the Toll signaling pathway and suppressing the expression of the antifungal peptide drosomycin. Acts upstream of SPE and grass, and downstream of the fungal cell wall pattern recognition receptor GNBP3. May function specifically in the GNBP3-dependent beta-1,3-glucan branch of the Toll pathway. The polypeptide is Serine protease inhibitor 42Dd (Drosophila melanogaster (Fruit fly)).